The following is a 245-amino-acid chain: tRNA (guanine-N(1)-)-methyltransferase (245 aa).

Residues glycine 108 and 127-132 (IGDYVL) contribute to the S-adenosyl-L-methionine site.

It belongs to the RNA methyltransferase TrmD family. Homodimer.

It is found in the cytoplasm. It carries out the reaction guanosine(37) in tRNA + S-adenosyl-L-methionine = N(1)-methylguanosine(37) in tRNA + S-adenosyl-L-homocysteine + H(+). Functionally, specifically methylates guanosine-37 in various tRNAs. This is tRNA (guanine-N(1)-)-methyltransferase from Lactobacillus delbrueckii subsp. bulgaricus (strain ATCC 11842 / DSM 20081 / BCRC 10696 / JCM 1002 / NBRC 13953 / NCIMB 11778 / NCTC 12712 / WDCM 00102 / Lb 14).